The following is a 40-amino-acid chain: MANTGGRIPLWLVATVAGLAAIGVLGIFFYGGYSGLGSSI.

A helical transmembrane segment spans residues 8–28; that stretch reads IPLWLVATVAGLAAIGVLGIF.

Belongs to the PsbJ family. PSII is composed of 1 copy each of membrane proteins PsbA, PsbB, PsbC, PsbD, PsbE, PsbF, PsbH, PsbI, PsbJ, PsbK, PsbL, PsbM, PsbT, PsbX, PsbY, PsbZ, Psb30/Ycf12, at least 3 peripheral proteins of the oxygen-evolving complex and a large number of cofactors. It forms dimeric complexes.

It localises to the plastid. The protein localises to the cyanelle thylakoid membrane. Its function is as follows. One of the components of the core complex of photosystem II (PSII). PSII is a light-driven water:plastoquinone oxidoreductase that uses light energy to abstract electrons from H(2)O, generating O(2) and a proton gradient subsequently used for ATP formation. It consists of a core antenna complex that captures photons, and an electron transfer chain that converts photonic excitation into a charge separation. The protein is Photosystem II reaction center protein J of Cyanophora paradoxa.